Reading from the N-terminus, the 125-residue chain is Small ribosomal subunit protein uS13 (125 aa).

The protein belongs to the universal ribosomal protein uS13 family. In terms of assembly, part of the 30S ribosomal subunit. Forms a loose heterodimer with protein S19. Forms two bridges to the 50S subunit in the 70S ribosome.

In terms of biological role, located at the top of the head of the 30S subunit, it contacts several helices of the 16S rRNA. In the 70S ribosome it contacts the 23S rRNA (bridge B1a) and protein L5 of the 50S subunit (bridge B1b), connecting the 2 subunits; these bridges are implicated in subunit movement. Contacts the tRNAs in the A and P-sites. The polypeptide is Small ribosomal subunit protein uS13 (Rickettsia rickettsii (strain Iowa)).